The following is a 702-amino-acid chain: MADTGLRRVVPSDLYPLVLRFLRDSQLSEVASKFAKATGATQQDANASSLLDIYSFWLNRSTKAPKVKLQSNGPVTKKAKKETSSSDSSEDSSEDEDKKAQGLPTQKAAAQVKRASVPQHAGKAAAKASESSSSEESSEEEEEDKKKKPVQQKAAKPQAKAVRPPAKKAESSESDSDSDSDSSSEEETPQTQKPKAAVAAKAQTKAEAKPGTPAKAQPKVANGKAAASSSSSSSSDDSEEEKKAAAPPKKTVPKKQVVAKAPVKVAAAPTQKSSSSEDSSSEEEEGQRQPMKKKAGPYSSVPPPSVPLPKKSPGTQAPKKAAAQTQPADSSDDSSDDSDSSSEEEKKPPAKTVVSKTPAKAAPVKKKAESSSDSSDSDSSEDEAPAKPVSTTKSPKPAVTPKPSAAKAVTTPKQPAGSNQKPQSRKADSSSSEEESSSSEEEEASKKSATTPKAKVTAKAAPAKQAPQAAGDSSSDSDSSSSEEEEKTPKPPAKKKAAGGAVSTPAPGKKAEAKSSSSSSSSSSEDSSEEEKKKKPKATTPKIQASKANGTPASLNGKAAKESEEEEEEEETEEKKKAAGTKPGSGKKRKQNETADEATTPQAKKVKLETPNTFPKRKKGERRASSPFRRVREEEIEVDSRVADNSFDAKRGAAGDWGERANQVLKFTKGKSFRHEKTKKKRGSYRGGSISVQVNSVKFDSE.

The LisH domain maps to 10–42 (VPSDLYPLVLRFLRDSQLSEVASKFAKATGATQ). Lys-33 is subject to N6-acetyllysine. The segment at 65–635 (PKVKLQSNGP…SPFRRVREEE (571 aa)) is disordered. Residues Lys-68 and Lys-77 each participate in a glycyl lysine isopeptide (Lys-Gly) (interchain with G-Cter in SUMO2) cross-link. Acidic serine cluster repeat units lie at residues 85-96 (SSDSSEDSSEDE) and 130-141 (ESSSSEESSEEE). Residues 85-566 (SSDSSEDSSE…GKAAKESEEE (482 aa)) form an 11 X 12 AA approximate repeats of an acidic serine cluster region. A Phosphoserine modification is found at Ser-88. A diphosphoserine mark is found at Ser-89 and Ser-92. Phosphoserine; by CK2 occurs at positions 89 and 92. At Ser-93 the chain carries Phosphoserine. 2 stretches are compositionally biased toward low complexity: residues 123–135 (KAAAKASESSSSE) and 151–164 (QQKAAKPQAKAVRP). Positions 172 to 188 (SESDSDSDSDSSSEEET) are enriched in acidic residues. One copy of the Acidic serine cluster 3 repeat lies at 176-187 (SDSDSDSSSEEE). 4 stretches are compositionally biased toward low complexity: residues 189–205 (PQTQKPKAAVAAKAQTK), 224–235 (KAAASSSSSSSS), 245–278 (AAPPKKTVPKKQVVAKAPVKVAAAPTQKSSSSED), and 308–329 (LPKKSPGTQAPKKAAAQTQPAD). Glycyl lysine isopeptide (Lys-Gly) (interchain with G-Cter in SUMO2) cross-links involve residues Lys-195 and Lys-201. The segment at 215-390 (KAQPKVANGK…EDEAPAKPVS (176 aa)) is interaction with RPA194. 2 Acidic serine cluster repeats span residues 232-241 (SSSSDDSEEE) and 273-284 (SSSSEDSSSEEE). The segment covering 330–342 (SSDDSSDDSDSSS) has biased composition (acidic residues). Residues 334–345 (SSDDSDSSSEEE) form an Acidic serine cluster 6 repeat. Residues Lys-351 and Lys-356 each participate in a glycyl lysine isopeptide (Lys-Gly) (interchain with G-Cter in SUMO2) cross-link. Over residues 353–362 (VVSKTPAKAA) the composition is skewed to low complexity. 3 positions are modified to phosphoserine: Ser-371, Ser-372, and Ser-375. The stretch at 372–383 (SDSSDSDSSEDE) is one Acidic serine cluster 7 repeat. Glycyl lysine isopeptide (Lys-Gly) (interchain with G-Cter in SUMO2) cross-links involve residues Lys-396, Lys-402, Lys-407, and Lys-413. The segment covering 411 to 422 (TPKQPAGSNQKP) has biased composition (polar residues). Residue Lys-421 is modified to N6-acetyllysine; alternate. Residue Lys-421 forms a Glycyl lysine isopeptide (Lys-Gly) (interchain with G-Cter in SUMO1); alternate linkage. Lys-421 participates in a covalent cross-link: Glycyl lysine isopeptide (Lys-Gly) (interchain with G-Cter in SUMO2); alternate. Residues 431–442 (SSEEESSSSEEE) form an Acidic serine cluster 8 repeat. The segment covering 431–443 (SSEEESSSSEEEE) has biased composition (acidic residues). Glycyl lysine isopeptide (Lys-Gly) (interchain with G-Cter in SUMO2) cross-links involve residues Lys-447 and Lys-459. Composition is skewed to low complexity over residues 447-480 (KSATTPKAKVTAKAAPAKQAPQAAGDSSSDSDSS) and 514-525 (KSSSSSSSSSSE). 2 Acidic serine cluster repeats span residues 474–484 (SSDSDSSSSEE) and 521–531 (SSSSEDSSEEE). Residues 541–554 (PKIQASKANGTPAS) are compositionally biased toward polar residues. The Acidic serine cluster 11 repeat unit spans residues 555 to 566 (LNGKAAKESEEE). Ser-563 carries the phosphoserine modification. The span at 563–572 (SEEEEEEEET) shows a compositional bias: acidic residues. Lys-575 is covalently cross-linked (Glycyl lysine isopeptide (Lys-Gly) (interchain with G-Cter in SUMO1)). Lys-582 is covalently cross-linked (Glycyl lysine isopeptide (Lys-Gly) (interchain with G-Cter in SUMO2)). Ser-585 carries the post-translational modification Phosphoserine. Residue Thr-594 is modified to Phosphothreonine. Residue Lys-607 forms a Glycyl lysine isopeptide (Lys-Gly) (interchain with G-Cter in SUMO2) linkage. 2 positions are modified to phosphothreonine: Thr-610 and Thr-613. Lys-616 participates in a covalent cross-link: Glycyl lysine isopeptide (Lys-Gly) (interchain with G-Cter in SUMO2). Ser-625 and Ser-646 each carry phosphoserine. Lys-650 is covalently cross-linked (Glycyl lysine isopeptide (Lys-Gly) (interchain with G-Cter in SUMO2)). Lys-666 bears the N6-acetyllysine; alternate mark. A Glycyl lysine isopeptide (Lys-Gly) (interchain with G-Cter in SUMO2); alternate cross-link involves residue Lys-666. Arg-686 bears the Omega-N-methylarginine mark. Ser-689 carries the post-translational modification Phosphoserine. A Glycyl lysine isopeptide (Lys-Gly) (interchain with G-Cter in SUMO2) cross-link involves residue Lys-698. Residue Ser-701 is modified to Phosphoserine.

The protein belongs to the NOLC1 family. As to quaternary structure, interacts with RNA polymerase I 194 kDa subunit (RPA194) and with casein kinase-II. Interacts with DKC1/NAP57, NOP58 and fibrillarin. Post-translationally, undergoes rapid and massive phosphorylation/dephosphorylation cycles on CK2 and PKC sites. NOLC1 is one of the mostly phosphorylated proteins in the cell. Pyrophosphorylated by 5-diphosphoinositol pentakisphosphate (5-IP7). Serine pyrophosphorylation is achieved by Mg(2+)-dependent, but enzyme independent transfer of a beta-phosphate from a inositol pyrophosphate to a pre-phosphorylated serine residue. In terms of processing, ubiquitinated. Monoubiquitination by the BCR(KBTBD8) complex promotes the formation of a NOLC1-TCOF1 complex that acts as a platform to connect RNA polymerase I with enzymes responsible for ribosomal processing and modification, leading to remodel the translational program of differentiating cells in favor of neural crest specification.

The protein resides in the nucleus. Its subcellular location is the nucleolus. It is found in the cytoplasm. Functionally, nucleolar protein that acts as a regulator of RNA polymerase I by connecting RNA polymerase I with enzymes responsible for ribosomal processing and modification. Required for neural crest specification: following monoubiquitination by the BCR(KBTBD8) complex, associates with TCOF1 and acts as a platform to connect RNA polymerase I with enzymes responsible for ribosomal processing and modification, leading to remodel the translational program of differentiating cells in favor of neural crest specification. Involved in nucleologenesis, possibly by playing a role in the maintenance of the fundamental structure of the fibrillar center and dense fibrillar component in the nucleolus. It has intrinsic GTPase and ATPase activities. This is Nucleolar and coiled-body phosphoprotein 1 from Mus musculus (Mouse).